The sequence spans 424 residues: MSVDSMLCDRIDIAKQLIKRSEALSRSRVGGVEGGAKLCSKLKAELKFLQKVEAGKVAIKESHLRSTNLTHLQAVIESAESLEEVVSVLHVFSYNDQFGEKQSLVVDVVANGGHTWVKAIGRKAEALHNIWLGRGQYGDKSVIEQAEDYLLASSQQLVQYSSPHIIFAFYNSVSKPMAEKLKEIGISVRGDIVAVNTSQENLPEENYLSGSESDCDGDDTAVLHVSKVDTENIVASIAFPTEIKVEACKRVNLDITTLITYVSALSHGGCHWLFKEKVLTEQAAQERQEKVLPLLKSFMEAKELFACESAIKDFQSILETLGGPAEKERAALLVKSITVVPDQPSERASKLACSSKINSRSISIFGTGETLKAITMTANSGFVRAAANQGVKFSVFIHQPRALTESKESSATPLPNNYASSNLL.

The protein belongs to the UPF0415 family.

The sequence is that of UPF0415 protein C7orf25 homolog from Xenopus laevis (African clawed frog).